The chain runs to 682 residues: DNA ligase (682 aa).

Residues 42–46 (DAAYD), 88–89 (SL), and Glu121 each bind NAD(+). The active-site N6-AMP-lysine intermediate is Lys123. NAD(+)-binding residues include Arg144, Glu180, Lys291, and Lys315. Zn(2+) is bound by residues Cys409, Cys412, Cys427, and Cys433. In terms of domain architecture, BRCT spans 601–682 (AAGGALAGKT…FRSLAGLPPG (82 aa)).

The protein belongs to the NAD-dependent DNA ligase family. LigA subfamily. Mg(2+) serves as cofactor. Requires Mn(2+) as cofactor.

The catalysed reaction is NAD(+) + (deoxyribonucleotide)n-3'-hydroxyl + 5'-phospho-(deoxyribonucleotide)m = (deoxyribonucleotide)n+m + AMP + beta-nicotinamide D-nucleotide.. Functionally, DNA ligase that catalyzes the formation of phosphodiester linkages between 5'-phosphoryl and 3'-hydroxyl groups in double-stranded DNA using NAD as a coenzyme and as the energy source for the reaction. It is essential for DNA replication and repair of damaged DNA. The chain is DNA ligase from Acidiphilium cryptum (strain JF-5).